The primary structure comprises 326 residues: uncharacterized protein (326 aa).

It to B.subtilis XkdQ.

This is an uncharacterized protein from Bacillus subtilis (strain 168).